A 391-amino-acid polypeptide reads, in one-letter code: Formate-dependent phosphoribosylglycinamide formyltransferase (391 aa).

N(1)-(5-phospho-beta-D-ribosyl)glycinamide-binding positions include 18 to 19 and Glu-78; that span reads EL. ATP is bound by residues Arg-110, Lys-151, 156 to 161, 191 to 194, and Glu-199; these read SSGKGQ and EEFI. The ATP-grasp domain maps to 115 to 305; it reads DLAAQQLGLR…EFELHLRAVL (191 aa). Residues Glu-264 and Glu-276 each contribute to the Mg(2+) site. N(1)-(5-phospho-beta-D-ribosyl)glycinamide is bound by residues Asp-283, Lys-353, and 360-361; that span reads RR.

Belongs to the PurK/PurT family. In terms of assembly, homodimer.

It catalyses the reaction N(1)-(5-phospho-beta-D-ribosyl)glycinamide + formate + ATP = N(2)-formyl-N(1)-(5-phospho-beta-D-ribosyl)glycinamide + ADP + phosphate + H(+). It participates in purine metabolism; IMP biosynthesis via de novo pathway; N(2)-formyl-N(1)-(5-phospho-D-ribosyl)glycinamide from N(1)-(5-phospho-D-ribosyl)glycinamide (formate route): step 1/1. Involved in the de novo purine biosynthesis. Catalyzes the transfer of formate to 5-phospho-ribosyl-glycinamide (GAR), producing 5-phospho-ribosyl-N-formylglycinamide (FGAR). Formate is provided by PurU via hydrolysis of 10-formyl-tetrahydrofolate. This Synechococcus elongatus (strain ATCC 33912 / PCC 7942 / FACHB-805) (Anacystis nidulans R2) protein is Formate-dependent phosphoribosylglycinamide formyltransferase.